The chain runs to 448 residues: N-succinylarginine dihydrolase (448 aa).

Substrate-binding positions include 19-28 (AGLSSGNIAS), Asn110, and 137-138 (HR). Residue Glu174 is part of the active site. Substrate is bound at residue Arg216. His252 is an active-site residue. Substrate-binding residues include Asp254 and Asn366. The active-site Nucleophile is Cys372.

The protein belongs to the succinylarginine dihydrolase family. Homodimer.

The enzyme catalyses N(2)-succinyl-L-arginine + 2 H2O + 2 H(+) = N(2)-succinyl-L-ornithine + 2 NH4(+) + CO2. Its pathway is amino-acid degradation; L-arginine degradation via AST pathway; L-glutamate and succinate from L-arginine: step 2/5. Catalyzes the hydrolysis of N(2)-succinylarginine into N(2)-succinylornithine, ammonia and CO(2). This Legionella pneumophila (strain Lens) protein is N-succinylarginine dihydrolase.